The chain runs to 181 residues: Adenine phosphoribosyltransferase (181 aa).

It belongs to the purine/pyrimidine phosphoribosyltransferase family. As to quaternary structure, homodimer.

The protein localises to the cytoplasm. The enzyme catalyses AMP + diphosphate = 5-phospho-alpha-D-ribose 1-diphosphate + adenine. It functions in the pathway purine metabolism; AMP biosynthesis via salvage pathway; AMP from adenine: step 1/1. Catalyzes a salvage reaction resulting in the formation of AMP, that is energically less costly than de novo synthesis. In Methylorubrum extorquens (strain CM4 / NCIMB 13688) (Methylobacterium extorquens), this protein is Adenine phosphoribosyltransferase.